The following is a 731-amino-acid chain: T-cell activation Rho GTPase-activating protein (731 aa).

The 190-residue stretch at 88–277 (QPLSIICGDS…FLIDNCFEIF (190 aa)) folds into the Rho-GAP domain. Disordered stretches follow at residues 288-421 (TSDD…AEDP), 464-507 (SLDA…IKKH), and 641-662 (HHVE…GLSP). Residues 299–311 (SDVSTLQNDSAYD) are compositionally biased toward polar residues. The span at 319-329 (SNSSSGISSPS) shows a compositional bias: low complexity. Over residues 380–399 (SMPSSQECLESRVTNQTLTK) the composition is skewed to polar residues. Serine 400 is subject to Phosphoserine. The segment covering 464–480 (SLDASSDSSPVASPSSP) has biased composition (low complexity). Basic and acidic residues-rich tracts occupy residues 494–503 (KTEKGKPSRE) and 641–652 (HHVEDSRHRGSK).

May function as a GTPase-activating protein and may play important roles during T-cell activation. This is T-cell activation Rho GTPase-activating protein (TAGAP) from Homo sapiens (Human).